We begin with the raw amino-acid sequence, 322 residues long: Ribose 1,5-bisphosphate isomerase (322 aa).

Substrate contacts are provided by residues 20 to 23 (RGAG) and Arg63. The active-site Proton acceptor is Cys133. Position 135-137 (135-137 (SKA)) interacts with substrate. Asp202 serves as the catalytic Proton donor. Substrate-binding positions include 212 to 213 (NK) and Lys238.

The protein belongs to the eIF-2B alpha/beta/delta subunits family. R15P isomerase subfamily. Homohexamer; trimer of dimers.

It carries out the reaction alpha-D-ribose 1,5-bisphosphate = D-ribulose 1,5-bisphosphate. With respect to regulation, is highly activated in the presence of AMP, with an increase of &gt;40-fold in activity levels. Among other nucleotides, isomerase activity is slightly increased in the presence of GMP, but CMP, UMP, TMP, and NAD(+) have no effect; therefore, AMP is likely the major activator of R15P isomerase in vivo. To a lesser extent, various compounds with an adenosyl moiety, such as dAMP, adenosine, or methylthioadenosine, can also act as activators. The regulation of this enzyme by AMP prevents excess degradation of intracellular AMP by the archaeal AMP degradation pathway. Functionally, catalyzes the isomerization of ribose 1,5-bisphosphate (R15P) to ribulose 1,5-bisphosphate (RuBP), the CO(2) acceptor and substrate for RubisCO. Only accepts the alpha-anomer of D-ribose 1,5-bisphosphate as substrate, being inactive on the beta-anomer. Displays a strict substrate specificity, since other phosphorylated sugars such as R5P, ribose, G16P, G6P, G1P, FBP, F6P, and PRPP, are not substrates. Functions in an archaeal AMP degradation pathway, together with AMP phosphorylase and RubisCO. The sequence is that of Ribose 1,5-bisphosphate isomerase from Thermococcus kodakarensis (strain ATCC BAA-918 / JCM 12380 / KOD1) (Pyrococcus kodakaraensis (strain KOD1)).